Here is a 493-residue protein sequence, read N- to C-terminus: Dihydro-heme d1 dehydrogenase (493 aa).

The N-terminal stretch at 1–18 (MRLIGLALGLLLGALAQA) is a signal peptide. Positions 19–96 (GEAPGEALYR…ALVAYLYQAP (78 aa)) constitute a Cytochrome c domain. 5 residues coordinate heme c: C31, C34, H35, R68, and M73. Positions 114–468 (PHPLATLPSR…YDAHSLEEVK (355 aa)) are D1-heme domain. Residues H165, G167, K169, R182, R207, N208, H341, R390, and H435 each contribute to the heme d1 site. Position 182 (R182) interacts with heme c.

This sequence belongs to the cytochrome c family. As to quaternary structure, monomer. Heme c serves as cofactor.

Its subcellular location is the periplasm. It catalyses the reaction dihydro-heme d1 + A = heme d1 + AH2. It participates in porphyrin-containing compound metabolism. Its function is as follows. Involved in heme d1 biosynthesis. Catalyzes the introduction of a double bond into the propionate side chain of pyrrole ring D of dihydro-heme d1, therefore converting dihydro-heme d1 to heme d1. The sequence is that of Dihydro-heme d1 dehydrogenase from Pseudomonas aeruginosa (strain ATCC 15692 / DSM 22644 / CIP 104116 / JCM 14847 / LMG 12228 / 1C / PRS 101 / PAO1).